The sequence spans 694 residues: MRHNRLKVLILGLVLLLTSCRADGPLHSADHGMGGMGMGGHGLDASPAPGYGVPVIPKDPNLRCEEITIPMCRGIGYNMTSFPNEMNHETQDEAGLEVHQFWPLVEIKCSPDLKFFLCSMYTPICLEDYHKPLPVCRSVCERARSGCAPIMQQYSFEWPERMACEHLPLHGDPDNLCMEQPSYTEAGSGGSSGGSGGSGSGSGSGGKRKQGGSGSGGSGAGGSSGSTSTKPCRGRNSKNCQNPQGEKASGKECSCSCRSPLIFLGKEQLLQQQSQMPMMHHPHHWYMNLTVQRIAGVPNCGIPCKGPFFSNDEKDFAGLWIALWSGLCFCSTLMTLTTFIIDTERFKYPERPIVFLSACYFMVAVGYLSRNFLQNEEIACDGLLLRESSTGPHSCTLVFLLTYFFGMASSIWWVILSFTWFLAAGLKWGNEAITKHSQYFHLAAWLIPTVQSVAVLLLSAVDGDPILGICYVGNLNPDHLKTFVLAPLFVYLVIGTTFLMAGFVSLFRIRSVIKQQGGVGAGVKADKLEKLMIRIGIFSVLYTVPATIVIGCYLYEAAYFEDWIKALACPCAQVKGPGKKPLYSVLMLKYFMALAVGITSGVWIWSGKTLESWRRFWRRLLGAPDRTGANQALIKQRPPIPHPYAGSGMGMPVGSAAGSLLATPYTQAGGASVASTSHHHLHHHVLKQPAASHV.

An N-terminal signal peptide occupies residues 1-22; it reads MRHNRLKVLILGLVLLLTSCRA. Residues 23–315 are Extracellular-facing; it reads DGPLHSADHG…GPFFSNDEKD (293 aa). The region spanning 59 to 180 is the FZ domain; sequence DPNLRCEEIT…GDPDNLCMEQ (122 aa). Cystine bridges form between C64–C125, C72–C118, C109–C147, C136–C177, and C140–C164. The N-linked (GlcNAc...) asparagine glycan is linked to N78. The disordered stretch occupies residues 175-253; sequence NLCMEQPSYT…QGEKASGKEC (79 aa). The segment covering 187-224 has biased composition (gly residues); sequence GSGGSSGGSGGSGSGSGSGGKRKQGGSGSGGSGAGGSS. N288 is a glycosylation site (N-linked (GlcNAc...) asparagine). A helical transmembrane segment spans residues 316–336; sequence FAGLWIALWSGLCFCSTLMTL. Residues 337–352 are Cytoplasmic-facing; it reads TTFIIDTERFKYPERP. Residues 353–373 traverse the membrane as a helical segment; it reads IVFLSACYFMVAVGYLSRNFL. The Extracellular segment spans residues 374 to 397; that stretch reads QNEEIACDGLLLRESSTGPHSCTL. A helical membrane pass occupies residues 398 to 418; it reads VFLLTYFFGMASSIWWVILSF. Residues 419–439 lie on the Cytoplasmic side of the membrane; the sequence is TWFLAAGLKWGNEAITKHSQY. The chain crosses the membrane as a helical span at residues 440-460; it reads FHLAAWLIPTVQSVAVLLLSA. At 461 to 482 the chain is on the extracellular side; that stretch reads VDGDPILGICYVGNLNPDHLKT. Residues 483 to 503 form a helical membrane-spanning segment; that stretch reads FVLAPLFVYLVIGTTFLMAGF. Over 504–534 the chain is Cytoplasmic; that stretch reads VSLFRIRSVIKQQGGVGAGVKADKLEKLMIR. The chain crosses the membrane as a helical span at residues 535-555; that stretch reads IGIFSVLYTVPATIVIGCYLY. At 556–584 the chain is on the extracellular side; that stretch reads EAAYFEDWIKALACPCAQVKGPGKKPLYS. Residues 585–605 form a helical membrane-spanning segment; the sequence is VLMLKYFMALAVGITSGVWIW. Residues 606-694 lie on the Cytoplasmic side of the membrane; the sequence is SGKTLESWRR…VLKQPAASHV (89 aa). Residues 608–613 carry the Lys-Thr-X-X-X-Trp motif, mediates interaction with the PDZ domain of Dvl family members motif; that stretch reads KTLESW. The PDZ-binding motif lies at 692 to 694; that stretch reads SHV.

Belongs to the G-protein coupled receptor Fz/Smo family. As to quaternary structure, interacts with ATP6AP2.

The protein resides in the cell membrane. Functionally, receptor for Wnt proteins. Most of frizzled receptors are coupled to the beta-catenin canonical signaling pathway, which leads to the activation of disheveled proteins, inhibition of GSK-3 kinase, nuclear accumulation of beta-catenin and activation of Wnt target genes. A second signaling pathway involving PKC and calcium fluxes has been seen for some family members, but it is not yet clear if it represents a distinct pathway or if it can be integrated in the canonical pathway, as PKC seems to be required for Wnt-mediated inactivation of GSK-3 kinase. Both pathways seem to involve interactions with G-proteins. Required to coordinate the cytoskeletons of epidermal cells to produce a parallel array of cuticular hairs and bristles. The chain is Frizzled-2 (fz2) from Drosophila melanogaster (Fruit fly).